The chain runs to 303 residues: Signal recognition particle receptor FtsY (303 aa).

GTP-binding positions include 108 to 115 (GVNGVGKT), 190 to 194 (DTAGR), and 254 to 257 (TKLD).

Belongs to the GTP-binding SRP family. FtsY subfamily. As to quaternary structure, part of the signal recognition particle protein translocation system, which is composed of SRP and FtsY. SRP is a ribonucleoprotein composed of Ffh and a 4.5S RNA molecule.

It localises to the cell inner membrane. The protein localises to the cytoplasm. The enzyme catalyses GTP + H2O = GDP + phosphate + H(+). Its function is as follows. Involved in targeting and insertion of nascent membrane proteins into the cytoplasmic membrane. Acts as a receptor for the complex formed by the signal recognition particle (SRP) and the ribosome-nascent chain (RNC). Interaction with SRP-RNC leads to the transfer of the RNC complex to the Sec translocase for insertion into the membrane, the hydrolysis of GTP by both Ffh and FtsY, and the dissociation of the SRP-FtsY complex into the individual components. This is Signal recognition particle receptor FtsY from Rickettsia prowazekii (strain Madrid E).